The primary structure comprises 669 residues: Acetolactate synthase, mitochondrial (669 aa).

The N-terminal 140 residues, 1-140 (MTVLAPLRRL…PRHEQAAGHA (140 aa)), are a transit peptide targeting the mitochondrion. Glu134 is a thiamine diphosphate binding site. FAD contacts are provided by residues Arg236, 351–372 (HGSG…LGVR), and 403–422 (DISP…IEGD). Residues 497-577 (AHQMWAATFY…VKILILNNEE (81 aa)) are thiamine pyrophosphate binding. Residues Asp548 and Asn575 each contribute to the Mg(2+) site.

This sequence belongs to the TPP enzyme family. It depends on Mg(2+) as a cofactor. Thiamine diphosphate serves as cofactor.

It localises to the mitochondrion. The enzyme catalyses 2 pyruvate + H(+) = (2S)-2-acetolactate + CO2. It functions in the pathway amino-acid biosynthesis; L-isoleucine biosynthesis; L-isoleucine from 2-oxobutanoate: step 1/4. It participates in amino-acid biosynthesis; L-valine biosynthesis; L-valine from pyruvate: step 1/4. In Schizosaccharomyces pombe (strain 972 / ATCC 24843) (Fission yeast), this protein is Acetolactate synthase, mitochondrial (ilv1).